Reading from the N-terminus, the 1011-residue chain is MKSLLKRLIALAAAYSVAAAPSFSHHSSQDAANKRELLQDLVTWDQHSLFVRGERLMIFSGEFHPFRLPVPGLWFDVFQKIKSLGFNAVSFYTDWGLMEGNPGHVVTDGIWSLDEFFTAAREAGLYLIARPGPYINAETSAGGIPGWVLRRKGIIRSNSEDYLRATDTYMATLGKIIAKAQITNGGPVILVQPENEYTTWPNVSESEFPTTMNQEVMAYAEKQLRDAGVVVPTVVNDNKNLGYFAPGTGLGETDLYGIDAYPMRYDCGNPYVWPTYRFPRDWQHEHRNHSPTTPFAIMEFQGGSGDGWGGVTEDGCAILVNNEAVRVVYKNNYGFGVRVFNIYMTYGGTNWGNLGYYGGYTSYDYGAAITEDRQIWREKYSEEKLQANFLKVSPAYLTSTPGNGVNGSYTGNKDITVTPLFGNGTTTNLYLVRHADFTSTGSAQYNLSISTSVGNVTIPQLGGSLSLNGRDSKFHITDYDVGGFNLIYSSAEVFTWAKGDNKKRVLVLYGGAGELHEFALPKHLPRPTVVEGSYVKIAKQGSAWVVQWEVAAQRRVLRAGKLEIHLLWRNDAYQHWVLELPAKQPIANYSSPSKETVIVKGGYLLRSAWITDNDLHLTGDVNVTTPLEVISAPKRFDGIVFNGQSLKSTRSKIGNLAATVHYQPPAISLPDLKRLDWKYIDSLPEISTEYNDEGWTPLTNTYTNNTREFTGPTCLYADDYGYHGGSLIYRGHFTANGDESWVFLNTSGGVGFANSVWLNQTFLGSWTGSGRNMTYPRNISLPHELSPGEPYVFTVVIDHMGQDEEAPGTDAIKFPRGILDYALSGHELSDLRWKMTGNLGGEQYQDLTRGPLNEGAMYAERQGYHLPSPPTSSWKSSNPIKEGLTGAGIGFYATSFSLDLPEGYDIPLSFRFNNSASAARSGTSYRCQLFVNGYQFGKYVNDLGPQTKFPVPEGILNYNGVNYVAVSLWALESQGALIGGLDLVASTPILSGYRKPAPAPQPGWKPRRGAY.

A signal peptide spans 1-19 (MKSLLKRLIALAAAYSVAA). Residues tyrosine 92, asparagine 136, alanine 137, glutamate 138, and asparagine 195 each coordinate substrate. Catalysis depends on glutamate 196, which acts as the Proton donor. The N-linked (GlcNAc...) asparagine glycan is linked to asparagine 202. Tyrosine 261 is a binding site for substrate. An intrachain disulfide couples cysteine 267 to cysteine 316. The Nucleophile role is filled by glutamate 299. Tyrosine 365 serves as a coordination point for substrate. Asparagine 406, asparagine 423, asparagine 446, asparagine 455, asparagine 588, asparagine 622, asparagine 704, asparagine 745, asparagine 759, asparagine 772, asparagine 778, and asparagine 913 each carry an N-linked (GlcNAc...) asparagine glycan.

This sequence belongs to the glycosyl hydrolase 35 family.

Its subcellular location is the secreted. The enzyme catalyses Hydrolysis of terminal non-reducing beta-D-galactose residues in beta-D-galactosides.. Its function is as follows. Cleaves beta-linked terminal galactosyl residues from gangliosides, glycoproteins, and glycosaminoglycans. This is Probable beta-galactosidase E (lacE) from Aspergillus fumigatus (strain CBS 144.89 / FGSC A1163 / CEA10) (Neosartorya fumigata).